The chain runs to 324 residues: tRNA pseudouridine synthase B (324 aa).

H43 contributes to the substrate binding site. The active-site Nucleophile is the D48. 3 residues coordinate substrate: Y76, Y179, and L200.

The protein belongs to the pseudouridine synthase TruB family. Type 1 subfamily.

The catalysed reaction is uridine(55) in tRNA = pseudouridine(55) in tRNA. In terms of biological role, responsible for synthesis of pseudouridine from uracil-55 in the psi GC loop of transfer RNAs. This chain is tRNA pseudouridine synthase B, found in Yersinia pestis bv. Antiqua (strain Nepal516).